A 250-amino-acid polypeptide reads, in one-letter code: Octanoyltransferase (250 aa).

Residues glycine 44–leucine 224 form the BPL/LPL catalytic domain. Substrate is bound by residues arginine 82–histidine 89, alanine 154–glycine 156, and glycine 167–serine 169. Cysteine 185 acts as the Acyl-thioester intermediate in catalysis. The interval leucine 224–threonine 250 is disordered. Residues alanine 239–threonine 250 are compositionally biased toward polar residues.

Belongs to the LipB family.

The protein resides in the cytoplasm. It catalyses the reaction octanoyl-[ACP] + L-lysyl-[protein] = N(6)-octanoyl-L-lysyl-[protein] + holo-[ACP] + H(+). The protein operates within protein modification; protein lipoylation via endogenous pathway; protein N(6)-(lipoyl)lysine from octanoyl-[acyl-carrier-protein]: step 1/2. Its function is as follows. Catalyzes the transfer of endogenously produced octanoic acid from octanoyl-acyl-carrier-protein onto the lipoyl domains of lipoate-dependent enzymes. Lipoyl-ACP can also act as a substrate although octanoyl-ACP is likely to be the physiological substrate. This is Octanoyltransferase from Nocardia farcinica (strain IFM 10152).